The following is a 162-amino-acid chain: ATP synthase subunit b (162 aa).

Residues 6-25 (TLFTLVTFLVLMLAVGKVAW) traverse the membrane as a helical segment.

The protein belongs to the ATPase B chain family. F-type ATPases have 2 components, F(1) - the catalytic core - and F(0) - the membrane proton channel. F(1) has five subunits: alpha(3), beta(3), gamma(1), delta(1), epsilon(1). F(0) has three main subunits: a(1), b(2) and c(10-14). The alpha and beta chains form an alternating ring which encloses part of the gamma chain. F(1) is attached to F(0) by a central stalk formed by the gamma and epsilon chains, while a peripheral stalk is formed by the delta and b chains.

The protein resides in the cell membrane. In terms of biological role, f(1)F(0) ATP synthase produces ATP from ADP in the presence of a proton or sodium gradient. F-type ATPases consist of two structural domains, F(1) containing the extramembraneous catalytic core and F(0) containing the membrane proton channel, linked together by a central stalk and a peripheral stalk. During catalysis, ATP synthesis in the catalytic domain of F(1) is coupled via a rotary mechanism of the central stalk subunits to proton translocation. Its function is as follows. Component of the F(0) channel, it forms part of the peripheral stalk, linking F(1) to F(0). This chain is ATP synthase subunit b, found in Lacticaseibacillus paracasei (strain ATCC 334 / BCRC 17002 / CCUG 31169 / CIP 107868 / KCTC 3260 / NRRL B-441) (Lactobacillus paracasei).